The chain runs to 143 residues: NADH-quinone oxidoreductase subunit A (143 aa).

The next 3 membrane-spanning stretches (helical) occupy residues 8–28, 63–83, and 90–110; these read FGNV…GYLT, FYVV…LYPW, and LGVF…LGLV.

It belongs to the complex I subunit 3 family. NDH-1 is composed of 14 different subunits. Subunits NuoA, H, J, K, L, M, N constitute the membrane sector of the complex.

It localises to the cell inner membrane. The enzyme catalyses a quinone + NADH + 5 H(+)(in) = a quinol + NAD(+) + 4 H(+)(out). Functionally, NDH-1 shuttles electrons from NADH, via FMN and iron-sulfur (Fe-S) centers, to quinones in the respiratory chain. The immediate electron acceptor for the enzyme in this species is believed to be a menaquinone. Couples the redox reaction to proton translocation (for every two electrons transferred, four hydrogen ions are translocated across the cytoplasmic membrane), and thus conserves the redox energy in a proton gradient. The protein is NADH-quinone oxidoreductase subunit A of Chlorobium phaeobacteroides (strain DSM 266 / SMG 266 / 2430).